Here is a 559-residue protein sequence, read N- to C-terminus: Tryprostatin B 6-hydroxylase (559 aa).

3 consecutive transmembrane segments (helical) span residues 13 to 35, 48 to 65, and 82 to 104; these read PSVMKCGYLATAGLIGICTHLSY, YVRFHLCLTMGVAALLYA, and VSLLMATYLVGLFASLLLYRTLF. Cys502 lines the heme pocket.

The protein belongs to the cytochrome P450 family. The cofactor is heme.

The protein localises to the membrane. It carries out the reaction tryprostatin B + reduced [NADPH--hemoprotein reductase] + O2 = 6-hydroxytryprostatin B + oxidized [NADPH--hemoprotein reductase] + H2O + H(+). The protein operates within mycotoxin biosynthesis. Its function is as follows. Cytochrome P450 monooxygenase; part of the gene cluster that mediates the biosynthesis of fumitremorgins, indole alkaloids that carry not only intriguing chemical structures, but also interesting biological and pharmacological activities. The biosynthesis of fumitremorgin-type alkaloids begins by condensation of the two amino acids L-tryptophan and L-proline to brevianamide F, catalyzed by the non-ribosomal peptide synthetase ftmA. Brevianamide F is then prenylated by the prenyltransferase ftmPT1/ftmB in the presence of dimethylallyl diphosphate, resulting in the formation of tryprostatin B. The three cytochrome P450 monooxygenases, ftmP450-1/ftmC, ftmP450-2/ftmE and ftmP450-3/FtmG, are responsible for the conversion of tryprostatin B to 6-hydroxytryprostatin B, tryprostatin A to fumitremorgin C and fumitremorgin C to 12,13-dihydroxyfumitremorgin C, respectively. The putative methyltransferase ftmMT/ftmD is expected for the conversion of 6-hydroxytryprostatin B to tryprostatin A. FtmPT2/FtmH catalyzes the prenylation of 12,13-dihydroxyfumitre-morgin C in the presence of dimethylallyl diphosphate, resulting in the formation of fumitremorgin B. Fumitremorgin B is further converted to verruculogen by ftmOx1/ftmF via the insertion of an endoperoxide bond between the two prenyl moieties. In some fungal species, verruculogen is further converted to fumitremorgin A, but the enzymes involved in this step have not been identified yet. In Aspergillus fumigatus (Neosartorya fumigata), this protein is Tryprostatin B 6-hydroxylase.